A 326-amino-acid polypeptide reads, in one-letter code: D-amino-acid oxidase (326 aa).

FAD contacts are provided by Gly-18, Val-19, Thr-46, Thr-47, Ser-48, Ala-52, Ala-53, Val-162, and Ser-179. Residues Tyr-222 and Arg-277 each coordinate D-proline. D-serine-binding residues include Tyr-222 and Arg-277. Positions 277, 303, 304, 306, and 308 each coordinate FAD. Residue Gly-304 participates in D-proline binding. Position 304 (Gly-304) interacts with D-serine.

Belongs to the DAMOX/DASOX family. As to quaternary structure, monomer. FAD is required as a cofactor.

Its subcellular location is the cytoplasm. It localises to the secreted. The protein resides in the cell wall. The enzyme catalyses a D-alpha-amino acid + O2 + H2O = a 2-oxocarboxylate + H2O2 + NH4(+). The catalysed reaction is D-valine + O2 + H2O = 3-methyl-2-oxobutanoate + H2O2 + NH4(+). It carries out the reaction D-leucine + O2 + H2O = 4-methyl-2-oxopentanoate + H2O2 + NH4(+). It catalyses the reaction D-isoleucine + O2 + H2O = (R)-3-methyl-2-oxopentanoate + H2O2 + NH4(+). The enzyme catalyses D-tyrosine + O2 + H2O = 3-(4-hydroxyphenyl)pyruvate + H2O2 + NH4(+). The catalysed reaction is D-threonine + O2 + H2O = (S)-3-hydroxy-2-oxobutanoate + H2O2 + NH4(+). Its activity is regulated as follows. Inhibited by benzoate and phenylmethylsulfonyl fluoride (PMSF). Weakly inhibited by anthranilate, crotonate, and the amino acid-modifying agents dithionitrobenzoic acid and diethyl pyrocarbonate. Not inhibited by malonate, meso-tartrate, D-malate, or the amino acid-modifying agents iodoacetic acid or butane-2,3-dione. Functionally, catalyzes the oxidative deamination of D-amino acids with broad substrate specificity. This is D-amino-acid oxidase from Rubrobacter xylanophilus (strain DSM 9941 / JCM 11954 / NBRC 16129 / PRD-1).